The chain runs to 768 residues: Post-transcriptional regulator MKT1 (768 aa).

The protein belongs to the XPG/RAD2 endonuclease family. As to quaternary structure, interacts with PBP1.

The protein resides in the cytoplasm. It is found in the cytosol. Involved in 3'-UTR mediated RNA regulation. Complexes with PBP1 to promote mRNA interactions with poly(A)-binding protein. The chain is Post-transcriptional regulator MKT1 from Cryptococcus neoformans var. grubii serotype A (strain H99 / ATCC 208821 / CBS 10515 / FGSC 9487) (Filobasidiella neoformans var. grubii).